Here is a 310-residue protein sequence, read N- to C-terminus: MSSLVTQINFNKINNSQSTVKDYILLMKPRVMSLVIFTGFVGMWLAPDSIHPLIAGIAVICIALGAGSAGAMNMWYDRDIDILMKRTQNRPIVRGVIEPDEALSFGLITGFFAVFFMALCVNILASFLLLFTIFYYICIYTIWLKRRSIQNIVIGGVSGALPPVIGHAAVSNTISLESIILFLIIFIWTPPHSWAIALFCNDDYKHCKIPMMPVVKGTLYTKKQILIYSIILFIVSLMPFFIGMNNDIYLIIVCIIGLVFLYYAFSLFYDTPDNKQAKRFFTYSIFYLCFIFILLSSTSTIHSLRDIIFG.

9 helical membrane-spanning segments follow: residues 31–51 (VMSLVIFTGFVGMWLAPDSIH), 52–72 (PLIAGIAVICIALGAGSAGAM), 102–119 (ALSFGLITGFFAVFFMAL), 123–145 (ILASFLLLFTIFYYICIYTIWLK), 151–171 (NIVIGGVSGALPPVIGHAAVS), 179–199 (IILFLIIFIWTPPHSWAIALF), 225–245 (ILIYSIILFIVSLMPFFIGMN), 248–268 (IYLIIVCIIGLVFLYYAFSLF), and 281–301 (FTYSIFYLCFIFILLSSTSTI).

It belongs to the UbiA prenyltransferase family. Protoheme IX farnesyltransferase subfamily.

It is found in the cell inner membrane. The catalysed reaction is heme b + (2E,6E)-farnesyl diphosphate + H2O = Fe(II)-heme o + diphosphate. The protein operates within porphyrin-containing compound metabolism; heme O biosynthesis; heme O from protoheme: step 1/1. In terms of biological role, converts heme B (protoheme IX) to heme O by substitution of the vinyl group on carbon 2 of heme B porphyrin ring with a hydroxyethyl farnesyl side group. The sequence is that of Protoheme IX farnesyltransferase from Rickettsia prowazekii (strain Madrid E).